The sequence spans 513 residues: Lysine--tRNA ligase (513 aa).

2 residues coordinate Mg(2+): Glu423 and Glu430.

Belongs to the class-II aminoacyl-tRNA synthetase family. As to quaternary structure, homodimer. It depends on Mg(2+) as a cofactor.

It is found in the cytoplasm. The enzyme catalyses tRNA(Lys) + L-lysine + ATP = L-lysyl-tRNA(Lys) + AMP + diphosphate. The polypeptide is Lysine--tRNA ligase (Anaeromyxobacter dehalogenans (strain 2CP-C)).